The following is a 183-amino-acid chain: Isopentenyl-diphosphate Delta-isomerase (183 aa).

Residues H26 and H33 each contribute to the Mn(2+) site. The region spanning 31-169 (PLHFAFSCYV…PFAFSPWMVE (139 aa)) is the Nudix hydrolase domain. C68 is an active-site residue. Residue C68 participates in Mg(2+) binding. Position 70 (H70) interacts with Mn(2+). Position 88 (E88) interacts with Mg(2+). Mn(2+) is bound by residues E118 and E120. E120 is an active-site residue.

This sequence belongs to the IPP isomerase type 1 family. The cofactor is Mg(2+). Mn(2+) is required as a cofactor.

The protein resides in the cytoplasm. The enzyme catalyses isopentenyl diphosphate = dimethylallyl diphosphate. The protein operates within isoprenoid biosynthesis; dimethylallyl diphosphate biosynthesis; dimethylallyl diphosphate from isopentenyl diphosphate: step 1/1. In terms of biological role, catalyzes the 1,3-allylic rearrangement of the homoallylic substrate isopentenyl (IPP) to its highly electrophilic allylic isomer, dimethylallyl diphosphate (DMAPP). In Corynebacterium diphtheriae (strain ATCC 700971 / NCTC 13129 / Biotype gravis), this protein is Isopentenyl-diphosphate Delta-isomerase.